Reading from the N-terminus, the 267-residue chain is Cerberus (267 aa).

Positions 1-17 (MHLLLFQLLVLLPLGKT) are cleaved as a signal peptide. 2 disordered regions span residues 19 to 52 (RHQD…EAEE) and 87 to 113 (WKKP…QSLI). Residue N26 is glycosylated (N-linked (GlcNAc...) asparagine). Positions 88 to 101 (KKPEREMHPSRDSD) are enriched in basic and acidic residues. Intrachain disulfides connect C162/C209, C176/C223, C186/C239, and C190/C241. The CTCK domain maps to 162–246 (CRTVPFSQTI…EECQCKVKTE (85 aa)). The N-linked (GlcNAc...) asparagine glycan is linked to N222.

The protein belongs to the DAN family. In terms of assembly, forms monomers and predominantly dimers. Post-translationally, N-glycosylated.

Its subcellular location is the secreted. Cytokine that may play a role in anterior neural induction and somite formation during embryogenesis in part through a BMP-inhibitory mechanism. Can regulate Nodal signaling during gastrulation as well as the formation and patterning of the primitive streak. The protein is Cerberus (CER1) of Homo sapiens (Human).